The following is a 309-amino-acid chain: Methionyl-tRNA formyltransferase (309 aa).

107-110 lines the (6S)-5,6,7,8-tetrahydrofolate pocket; the sequence is SLLP.

The protein belongs to the Fmt family.

It catalyses the reaction L-methionyl-tRNA(fMet) + (6R)-10-formyltetrahydrofolate = N-formyl-L-methionyl-tRNA(fMet) + (6S)-5,6,7,8-tetrahydrofolate + H(+). Its function is as follows. Attaches a formyl group to the free amino group of methionyl-tRNA(fMet). The formyl group appears to play a dual role in the initiator identity of N-formylmethionyl-tRNA by promoting its recognition by IF2 and preventing the misappropriation of this tRNA by the elongation apparatus. The sequence is that of Methionyl-tRNA formyltransferase from Borrelia hermsii (strain HS1 / DAH).